The following is a 592-amino-acid chain: Dictomallein-1 (592 aa).

The N-terminal stretch at M1–C19 is a signal peptide. Residues P140–Y402 form the Peptidase M66 domain. Zn(2+) is bound at residue H294. E295 is an active-site residue. Zn(2+) is bound by residues H298 and H304.

The protein belongs to the dictomallein family. It depends on Zn(2+) as a cofactor.

It localises to the secreted. In Dictyostelium discoideum (Social amoeba), this protein is Dictomallein-1 (dtmlA).